Consider the following 323-residue polypeptide: Lipoyl synthase (323 aa).

A compositionally biased stretch (basic and acidic residues) spans 1 to 14 (MVTILDRTKPDDKR). Residues 1-25 (MVTILDRTKPDDKRIRHPEKAHKPD) form a disordered region. 7 residues coordinate [4Fe-4S] cluster: cysteine 61, cysteine 66, cysteine 72, cysteine 87, cysteine 91, cysteine 94, and serine 300. A Radical SAM core domain is found at 73–289 (WEKKHATFMI…EDIAYTKGFL (217 aa)).

The protein belongs to the radical SAM superfamily. Lipoyl synthase family. [4Fe-4S] cluster serves as cofactor.

The protein resides in the cytoplasm. The enzyme catalyses [[Fe-S] cluster scaffold protein carrying a second [4Fe-4S](2+) cluster] + N(6)-octanoyl-L-lysyl-[protein] + 2 oxidized [2Fe-2S]-[ferredoxin] + 2 S-adenosyl-L-methionine + 4 H(+) = [[Fe-S] cluster scaffold protein] + N(6)-[(R)-dihydrolipoyl]-L-lysyl-[protein] + 4 Fe(3+) + 2 hydrogen sulfide + 2 5'-deoxyadenosine + 2 L-methionine + 2 reduced [2Fe-2S]-[ferredoxin]. The protein operates within protein modification; protein lipoylation via endogenous pathway; protein N(6)-(lipoyl)lysine from octanoyl-[acyl-carrier-protein]: step 2/2. Its function is as follows. Catalyzes the radical-mediated insertion of two sulfur atoms into the C-6 and C-8 positions of the octanoyl moiety bound to the lipoyl domains of lipoate-dependent enzymes, thereby converting the octanoylated domains into lipoylated derivatives. The protein is Lipoyl synthase of Allorhizobium ampelinum (strain ATCC BAA-846 / DSM 112012 / S4) (Agrobacterium vitis (strain S4)).